A 492-amino-acid polypeptide reads, in one-letter code: Virion host shutoff protein (492 aa).

3 disordered regions span residues 110-130 (EEAS…SRPS), 288-307 (SQAR…LESM), and 334-371 (EDDY…ELVQ).

The protein belongs to the herpesviridae VHS protein family. Interacts with human EIF4H, EIF4A1 and EIF4A2; interaction with eIF4AI and EIF4A2 presumably allows Vhs protein to associate with the eIF4F cap-binding complex.

The protein resides in the virion. In terms of biological role, minor structural protein that acts as an endoribonuclease during lytic infection. Degrades host mRNAs in the cytoplasm by cutting them at preferred sites, including some in regions of translation initiation. Together with inhibition of host splicing by ICP27, contributes to an overall decrease in host protein synthesis. Also, after the onset of viral transcription, accelerates the turnover of viral mRNA, thereby facilitating the sequential expression of different classes of viral genes. Binds translation initiation factors eIF4H, eIF4AI, and eIF4AII, thereby may interact directly with the translation initiation complex and thus digest specifically mRNAs. Also impedes antigen presentation by major histocompatibility complex class I and class II molecules, inhibits secretion of cytokines that would otherwise recruit lymphocytes and neutrophils cells to the site of infection and blocks the activation of dendritic cells. Impedes the alpha/beta interferon-mediated response to infection. Inhibits the integrated stress response (ISR) in the infected cell, this function requires the endonuclease activity. Stress granule formation is thus inhibited, which allows protein synthesis and viral replication. In Homo sapiens (Human), this protein is Virion host shutoff protein (UL41).